Here is a 1761-residue protein sequence, read N- to C-terminus: Lysine-specific demethylase 3B (1761 aa).

The residue at position 2 (Ala-2) is an N-acetylalanine. A disordered region spans residues 253 to 346; sequence DNSAPQSEGG…QRAKQPPSTF (94 aa). Over residues 298 to 309 the composition is skewed to basic and acidic residues; sequence ASKKLKGDRGEV. Lys-361 is modified (N6-acetyllysine). Disordered stretches follow at residues 370–394 and 438–496; these read QDEP…QTPL and DTGL…NGVL. Composition is skewed to polar residues over residues 380 to 392, 453 to 468, and 477 to 495; these read ASFT…TGQT, SRSQ…SILA, and PSSS…SNGV. Ser-492, Ser-546, Ser-556, and Ser-560 each carry phosphoserine. Residues 572–603 are disordered; sequence RSVLGTDTKPGSKAGSSVDRKVPAESMPTLTP. Residue Thr-614 is modified to Phosphothreonine. The disordered stretch occupies residues 714–762; sequence GPSLSAMGNGRSSSPTSSLTQPIEMPTLSSSPTEERPTVGPGQQDNPLL. Residues 723–745 show a composition bias toward polar residues; that stretch reads GRSSSPTSSLTQPIEMPTLSSSP. Phosphoserine occurs at positions 766, 773, 778, and 779. A Glycyl lysine isopeptide (Lys-Gly) (interchain with G-Cter in SUMO2) cross-link involves residue Lys-788. Ser-798 is subject to Phosphoserine. The disordered stretch occupies residues 805–827; that stretch reads ACRQDSDSSTNSDLSDLSDSEEQ. Residues 1031 to 1056 form a C6-type zinc finger; the sequence is CDVCETTLFNIHWVCRKCGFGVCLDC. A compositionally biased stretch (polar residues) spans 1142 to 1161; it reads GMSQLPSINPSASSGNETTF. Residues 1142–1220 form a disordered region; sequence GMSQLPSINP…PCPDTAPPSS (79 aa). Basic and acidic residues predominate over residues 1174–1193; it reads EPDHVPKADSTDIRSEEPLK. Residues 1194–1204 are compositionally biased toward polar residues; sequence TDSSASNSNSE. Phosphoserine occurs at positions 1253 and 1259. The LXXLL motif motif lies at 1293–1297; it reads LRDLL. In terms of domain architecture, JmjC spans 1498–1721; the sequence is MPTRFEDLME…HCFRLTQEFR (224 aa). Positions 1560, 1562, and 1689 each coordinate Fe cation.

This sequence belongs to the JHDM2 histone demethylase family. Fe(2+) serves as cofactor. Ubiquitous. Highly expressed in placenta, skeletal muscle, kidney, heart and liver.

It is found in the nucleus. The enzyme catalyses N(6),N(6)-dimethyl-L-lysyl(9)-[histone H3] + 2 2-oxoglutarate + 2 O2 = L-lysyl(9)-[histone H3] + 2 formaldehyde + 2 succinate + 2 CO2. Histone demethylase that specifically demethylates 'Lys-9' of histone H3, thereby playing a central role in histone code. Demethylation of Lys residue generates formaldehyde and succinate. May have tumor suppressor activity. This is Lysine-specific demethylase 3B (KDM3B) from Homo sapiens (Human).